A 116-amino-acid polypeptide reads, in one-letter code: NADH-ubiquinone oxidoreductase chain 3 (116 aa).

A run of 3 helical transmembrane segments spans residues 3 to 23 (LFAT…LVSF), 56 to 76 (FFLV…LLPL), and 88 to 108 (TLFW…YEWA).

It belongs to the complex I subunit 3 family. Core subunit of respiratory chain NADH dehydrogenase (Complex I) which is composed of 45 different subunits.

It localises to the mitochondrion inner membrane. It catalyses the reaction a ubiquinone + NADH + 5 H(+)(in) = a ubiquinol + NAD(+) + 4 H(+)(out). Functionally, core subunit of the mitochondrial membrane respiratory chain NADH dehydrogenase (Complex I) which catalyzes electron transfer from NADH through the respiratory chain, using ubiquinone as an electron acceptor. Essential for the catalytic activity of complex I. In Danio rerio (Zebrafish), this protein is NADH-ubiquinone oxidoreductase chain 3 (mt-nd3).